A 144-amino-acid chain; its full sequence is MLQPKKTKFRRQQKGRAKGNAQRGNQLAFGSFGIKALETKWITGRQIEAARIAVTRYMQRQGQIWIRIFPDKPITRKPADVRMGKGKGAPEGFVAPVTPGRIIIEAEGVSYEIAKEALRLAAQKLPITTKFVVRRDYDIQNQNA.

A compositionally biased stretch (basic residues) spans 1 to 17 (MLQPKKTKFRRQQKGRA). A disordered region spans residues 1–22 (MLQPKKTKFRRQQKGRAKGNAQ).

It belongs to the universal ribosomal protein uL16 family. Part of the 50S ribosomal subunit.

Its function is as follows. Binds 23S rRNA and is also seen to make contacts with the A and possibly P site tRNAs. In Bacteroides thetaiotaomicron (strain ATCC 29148 / DSM 2079 / JCM 5827 / CCUG 10774 / NCTC 10582 / VPI-5482 / E50), this protein is Large ribosomal subunit protein uL16.